We begin with the raw amino-acid sequence, 396 residues long: Dual specificity mitogen-activated protein kinase kinase dSOR1 (396 aa).

Residues 25–44 are disordered; the sequence is APTPPFKTPSGTDTHSLLGK. Positions 87–364 constitute a Protein kinase domain; the sequence is LEKLGELGSG…LKTLLSHPWI (278 aa). ATP contacts are provided by residues 93–101 and Lys-116; that span reads LGSGNGGVV. Asp-209 serves as the catalytic Proton acceptor. A phosphoserine; by RAF mark is found at Ser-237 and Ser-241.

Belongs to the protein kinase superfamily. STE Ser/Thr protein kinase family. MAP kinase kinase subfamily. In terms of assembly, interacts with Raf and ksr; Dsor1 binding to ksr probably promotes ksr and Raf dimerization and ksr-mediated Raf transactivation. Post-translationally, phosphorylation on Ser/Thr by MAP kinase kinase kinases regulates positively the kinase activity.

The catalysed reaction is L-seryl-[protein] + ATP = O-phospho-L-seryl-[protein] + ADP + H(+). It catalyses the reaction L-threonyl-[protein] + ATP = O-phospho-L-threonyl-[protein] + ADP + H(+). It carries out the reaction L-tyrosyl-[protein] + ATP = O-phospho-L-tyrosyl-[protein] + ADP + H(+). Its function is as follows. Required downstream of Raf in the sevenless (sev), torso (tor), and Drosophila EGF receptor homolog (DER) signal transduction pathways. Involved in both positive regulation (at the posterior terminus) and negative regulation (at the anterior domain) of tll, as in other terminal class gene products, maybe via the ERK-A kinase. This is Dual specificity mitogen-activated protein kinase kinase dSOR1 (Dsor1) from Drosophila melanogaster (Fruit fly).